We begin with the raw amino-acid sequence, 1128 residues long: Cordon-bleu protein-like 1 (1128 aa).

Residues 1–35 form a disordered region; that stretch reads MDGRTPRPQDAPARRKPKAKAPLPPAETKYTDVSS. Phosphothreonine is present on T139. A phosphoserine mark is found at S204, S222, and S256. 3 disordered regions span residues 249–309, 325–441, and 454–499; these read KKRD…VPQD, MSVD…SPKS, and TLKN…TSNG. T260 is subject to Phosphothreonine. Positions 270–286 are enriched in polar residues; sequence FTRSNTISKPYISNTLP. A Phosphoserine modification is found at S273. Position 284 is a phosphothreonine (T284). The KKRRAP 1 signature appears at 291–296; it reads KKRRAP. Phosphoserine occurs at positions 326, 333, 344, and 356. The span at 345–357 shows a compositional bias: polar residues; sequence LQLSSMSAGNSSL. The KKRRAP 2 signature appears at 360–365; that stretch reads TKRKAP. The segment covering 397–415 has biased composition (polar residues); that stretch reads SEANSPEELSSPAGISSDY. A compositionally biased stretch (acidic residues) spans 416–425; that stretch reads SLEEIDEKEE. S438, S441, S461, S471, and S474 each carry phosphoserine. Over residues 475–488 the composition is skewed to basic and acidic residues; the sequence is MEEKQETKSTDGQE. Phosphoserine is present on residues S563, S584, S786, S813, S814, and S821. Disordered stretches follow at residues 780 to 840, 882 to 964, 995 to 1081, and 1103 to 1128; these read TEDS…PFAP, SAAA…SQVS, RSQS…PEQM, and IPSN…QDGH. The segment covering 899–908 has biased composition (basic and acidic residues); that stretch reads LTNKEAERDM. S911, S917, S947, S1069, and S1070 each carry phosphoserine. Polar residues-rich tracts occupy residues 1045-1081 and 1103-1122; these read SAHN…PEQM and IPSN…SMSP. One can recognise a WH2 domain in the interval 1081 to 1101; that stretch reads MRQSLLTAIRSGEAAAKLKRV. S1121 carries the post-translational modification Phosphoserine.

The protein is Cordon-bleu protein-like 1 of Homo sapiens (Human).